Here is a 420-residue protein sequence, read N- to C-terminus: Synaptosomal-associated protein 47 (420 aa).

T-SNARE coiled-coil homology domains follow at residues 110 to 172 and 357 to 419; these read AEAA…LTEL and TSEP…MKKL. The interval 338–357 is disordered; it reads ATHCEPSSGSQEGRPLQLQT. Over residues 342–357 the composition is skewed to polar residues; the sequence is EPSSGSQEGRPLQLQT.

The protein belongs to the SVAP1 family. Forms a complex containing SNAP47, VAMP2 and STX1A. Associates with the BLOC-1 complex. Interacts with BLOC1S6.

It is found in the endomembrane system. It localises to the cytoplasm. The protein localises to the perinuclear region. Its function is as follows. May play a role in intracellular membrane fusion. This is Synaptosomal-associated protein 47 (SNAP47) from Bos taurus (Bovine).